We begin with the raw amino-acid sequence, 137 residues long: Ribosomal RNA large subunit methyltransferase H (137 aa).

S-adenosyl-L-methionine is bound by residues Leu-56, Gly-85, and 104–109 (LSPLTF).

It belongs to the RNA methyltransferase RlmH family. Homodimer.

It is found in the cytoplasm. It carries out the reaction pseudouridine(1915) in 23S rRNA + S-adenosyl-L-methionine = N(3)-methylpseudouridine(1915) in 23S rRNA + S-adenosyl-L-homocysteine + H(+). In terms of biological role, specifically methylates the pseudouridine at position 1915 (m3Psi1915) in 23S rRNA. This chain is Ribosomal RNA large subunit methyltransferase H, found in Prochlorococcus marinus (strain MIT 9515).